The chain runs to 397 residues: Enoyl-[acyl-carrier-protein] reductase [NADH] (397 aa).

NAD(+) is bound by residues 48 to 53, 74 to 75, 111 to 112, and 139 to 140; these read GASTGY, FE, DA, and VA. Tyrosine 225 provides a ligand contact to substrate. The active-site Proton donor is tyrosine 235. Residues lysine 244 and 273-275 contribute to the NAD(+) site; that span reads VVT.

This sequence belongs to the TER reductase family. In terms of assembly, monomer.

It catalyses the reaction a 2,3-saturated acyl-[ACP] + NAD(+) = a (2E)-enoyl-[ACP] + NADH + H(+). The protein operates within lipid metabolism; fatty acid biosynthesis. In terms of biological role, involved in the final reduction of the elongation cycle of fatty acid synthesis (FAS II). Catalyzes the reduction of a carbon-carbon double bond in an enoyl moiety that is covalently linked to an acyl carrier protein (ACP). The sequence is that of Enoyl-[acyl-carrier-protein] reductase [NADH] from Burkholderia pseudomallei (strain 668).